Consider the following 310-residue polypeptide: TLC domain-containing protein 2 (310 aa).

Transmembrane regions (helical) follow at residues 6 to 26 (LLVA…LQLL), 40 to 60 (NIFV…VGLW), 79 to 99 (VLVA…LWNQ), 117 to 137 (CLST…SLLL), 167 to 187 (ASLA…SLWL), and 194 to 214 (LSLA…SISI). Positions 33 to 227 (RDRWMWRNIF…IRILTKDILQ (195 aa)) constitute a TLC domain.

This sequence belongs to the TLCD family.

The protein localises to the cell membrane. Functionally, regulates the composition and fluidity of the plasma membrane. Inhibits the incorporation of membrane-fluidizing phospholipids containing omega-3 long-chain polyunsaturated fatty acids (LCPUFA) and thereby promotes membrane rigidity. Does not appear to have any effect on LCPUFA synthesis. The sequence is that of TLC domain-containing protein 2 (Tlcd2) from Mus musculus (Mouse).